The following is a 100-amino-acid chain: Replication restart protein PriB (100 aa).

In terms of domain architecture, SSB spans 1–99 (MGFNNLVSLA…LRIQNIQEYK (99 aa)).

Belongs to the PriB family. Homodimer. Interacts with PriA and DnaT. Component of the replication restart primosome. Primosome assembly occurs via a 'hand-off' mechanism. PriA binds to replication forks, subsequently PriB then DnaT bind; DnaT then displaces ssDNA to generate the helicase loading substrate.

In terms of biological role, involved in the restart of stalled replication forks, which reloads the replicative helicase on sites other than the origin of replication; the PriA-PriB pathway is the major replication restart pathway. During primosome assembly it facilitates complex formation between PriA and DnaT on DNA; stabilizes PriA on DNA. Stimulates the DNA unwinding activity of PriA helicase. The protein is Replication restart protein PriB of Neisseria meningitidis serogroup A / serotype 4A (strain DSM 15465 / Z2491).